The chain runs to 389 residues: Succinate--CoA ligase [ADP-forming] subunit beta (389 aa).

Residues 9–236 enclose the ATP-grasp domain; sequence RDMFEAHGVP…KDSADPLEAK (228 aa). Residues Lys-45, 52 to 54, Ala-94, and Glu-99 each bind ATP; that span reads GRG. Residues Asn-191 and Asp-205 each coordinate Mg(2+). Substrate contacts are provided by residues Asn-256 and 318 to 320; that span reads GIT.

This sequence belongs to the succinate/malate CoA ligase beta subunit family. In terms of assembly, heterotetramer of two alpha and two beta subunits. Mg(2+) is required as a cofactor.

It catalyses the reaction succinate + ATP + CoA = succinyl-CoA + ADP + phosphate. The catalysed reaction is GTP + succinate + CoA = succinyl-CoA + GDP + phosphate. Its pathway is carbohydrate metabolism; tricarboxylic acid cycle; succinate from succinyl-CoA (ligase route): step 1/1. In terms of biological role, succinyl-CoA synthetase functions in the citric acid cycle (TCA), coupling the hydrolysis of succinyl-CoA to the synthesis of either ATP or GTP and thus represents the only step of substrate-level phosphorylation in the TCA. The beta subunit provides nucleotide specificity of the enzyme and binds the substrate succinate, while the binding sites for coenzyme A and phosphate are found in the alpha subunit. The protein is Succinate--CoA ligase [ADP-forming] subunit beta of Renibacterium salmoninarum (strain ATCC 33209 / DSM 20767 / JCM 11484 / NBRC 15589 / NCIMB 2235).